The following is a 433-amino-acid chain: Cyclin-dependent kinase F-3 (433 aa).

Residues 4 to 283 (YKVIREIGDG…AEQSLQHPFF (280 aa)) form the Protein kinase domain. Residues 10-18 (IGDGTCGNV) and lysine 33 each bind ATP. Catalysis depends on aspartate 125, which acts as the Proton acceptor. Residue serine 151 is modified to Phosphoserine. At threonine 156 the chain carries Phosphothreonine.

Belongs to the protein kinase superfamily. CMGC Ser/Thr protein kinase family. CDC2/CDKX subfamily.

It catalyses the reaction L-seryl-[protein] + ATP = O-phospho-L-seryl-[protein] + ADP + H(+). The enzyme catalyses L-threonyl-[protein] + ATP = O-phospho-L-threonyl-[protein] + ADP + H(+). The catalysed reaction is [DNA-directed RNA polymerase] + ATP = phospho-[DNA-directed RNA polymerase] + ADP + H(+). The sequence is that of Cyclin-dependent kinase F-3 (CDKF-3) from Oryza sativa subsp. japonica (Rice).